We begin with the raw amino-acid sequence, 1001 residues long: Serine/threonine-protein kinase TAO1 (1001 aa).

S9 is subject to Phosphoserine. In terms of domain architecture, Protein kinase spans 28–281; sequence FTDLREIGHG…SEELLKHIFV (254 aa). Residues 34–42 and K57 each bind ATP; that span reads IGHGSFGAV. D151 serves as the catalytic Proton acceptor. The disordered stretch occupies residues 324 to 433; the sequence is PAVEAQEEEE…QVSRHKSHYR (110 aa). The segment covering 350 to 373 has biased composition (low complexity); that stretch reads SNQSIPSMSISASSQSSSVNSLPD. Basic and acidic residues-rich tracts occupy residues 375–388 and 399–416; these read SDDKSELDMMEGDH and LKPEEENYREEGDPRTRA. S421 and S445 each carry phosphoserine. Positions 458-651 form a coiled coil; that stretch reads SELREQMSGY…QTQKDLEHAM (194 aa). The interval 567–587 is disordered; that stretch reads KEELNENQSTPKKEKQEWLSK. Residues 577-587 show a composition bias toward basic and acidic residues; sequence PKKEKQEWLSK. The residue at position 669 (T669) is a Phosphothreonine. A coiled-coil region spans residues 754 to 877; it reads KAVLKRLKEE…LERQAREIEA (124 aa). Residues 911-1001 are disordered; sequence SHNPTGGPGP…ISNGSHMSYT (91 aa). S965 carries the phosphoserine modification. Residues 975 to 1001 show a composition bias toward polar residues; that stretch reads GGRTEQGMSRSTSVTSQISNGSHMSYT.

It belongs to the protein kinase superfamily. STE Ser/Thr protein kinase family. STE20 subfamily. As to quaternary structure, self-associates. Interacts with MAP2K3. Interacts with SPRED1. Interacts with TESK1; the interaction inhibits TAOK1 kinase activity. Interacts with MAP3K7. In terms of processing, proteolytically processed by caspase-3 (CASP3). Autophosphorylated. Phosphorylated by ATM in response to DNA damage. Phosphorylated by LRRK2. Highly expressed in the testis, and to a lower extent also expressed in brain, placenta, colon and skeletal muscle.

The protein localises to the cytoplasm. It catalyses the reaction L-seryl-[protein] + ATP = O-phospho-L-seryl-[protein] + ADP + H(+). The enzyme catalyses L-threonyl-[protein] + ATP = O-phospho-L-threonyl-[protein] + ADP + H(+). Serine/threonine-protein kinase activity is inhibited by SPRED1. Functionally, serine/threonine-protein kinase involved in various processes such as p38/MAPK14 stress-activated MAPK cascade, DNA damage response and regulation of cytoskeleton stability. Phosphorylates MAP2K3, MAP2K6 and MARK2. Acts as an activator of the p38/MAPK14 stress-activated MAPK cascade by mediating phosphorylation and subsequent activation of the upstream MAP2K3 and MAP2K6 kinases. Involved in G-protein coupled receptor signaling to p38/MAPK14. In response to DNA damage, involved in the G2/M transition DNA damage checkpoint by activating the p38/MAPK14 stress-activated MAPK cascade, probably by mediating phosphorylation of MAP2K3 and MAP2K6. Acts as a regulator of cytoskeleton stability by phosphorylating 'Thr-208' of MARK2, leading to activate MARK2 kinase activity and subsequent phosphorylation and detachment of MAPT/TAU from microtubules. Also acts as a regulator of apoptosis: regulates apoptotic morphological changes, including cell contraction, membrane blebbing and apoptotic bodies formation via activation of the MAPK8/JNK cascade. Plays an essential role in the regulation of neuronal development in the central nervous system. Also plays a role in the regulation of neuronal migration to the cortical plate. This is Serine/threonine-protein kinase TAO1 (TAOK1) from Homo sapiens (Human).